The following is a 381-amino-acid chain: Cobalt-precorrin-5B C(1)-methyltransferase (381 aa).

It belongs to the CbiD family.

It catalyses the reaction Co-precorrin-5B + S-adenosyl-L-methionine = Co-precorrin-6A + S-adenosyl-L-homocysteine. It functions in the pathway cofactor biosynthesis; adenosylcobalamin biosynthesis; cob(II)yrinate a,c-diamide from sirohydrochlorin (anaerobic route): step 6/10. Its function is as follows. Catalyzes the methylation of C-1 in cobalt-precorrin-5B to form cobalt-precorrin-6A. The chain is Cobalt-precorrin-5B C(1)-methyltransferase from Methylococcus capsulatus (strain ATCC 33009 / NCIMB 11132 / Bath).